A 66-amino-acid chain; its full sequence is Large ribosomal subunit protein uL29 (66 aa).

Belongs to the universal ribosomal protein uL29 family.

This is Large ribosomal subunit protein uL29 from Helicobacter pylori (strain HPAG1).